The chain runs to 805 residues: Ribosome biogenesis protein ERB1 (805 aa).

The tract at residues 1–105 (MVKGRKSQKA…SDFSEDDTKS (105 aa)) is disordered. Over residues 8-22 (QKADKVTKAKKRVAD) the composition is skewed to basic and acidic residues. Over residues 23 to 75 (EVDESESEPELQVEGLIDAEAESEDDESFESAEENASAEEDEEDEEDEEDSDA) the composition is skewed to acidic residues. The required for interaction with NOP7 stretch occupies residues 264 to 382 (RFVPSKNEAK…LRKVPGYTES (119 aa)). The required for interaction with YTM1 stretch occupies residues 382–418 (SVRERFERSLDLYLAPRMRKNKLNIDPESLIPELPSP). WD repeat units lie at residues 434–473 (GHEG…EVYR), 482–522 (NPED…YDIE), 590–632 (VCKK…TQSP), 635–673 (KSKG…LVKK), 676–715 (PGAR…TPYK), 719–758 (YHDK…DMMK), and 775–805 (GHLG…MWTT).

The protein belongs to the WD repeat BOP1/ERB1 family. In terms of assembly, component of the NOP7 complex, composed of ERB1, NOP7 and YTM1. The complex is held together by ERB1, which interacts with NOP7 via its N-terminal domain and with YTM1 via a high-affinity interaction between the seven-bladed beta-propeller domains of the 2 proteins. The NOP7 complex associates with the 66S pre-ribosome.

The protein resides in the nucleus. It is found in the nucleolus. The protein localises to the nucleoplasm. Component of the NOP7 complex, which is required for maturation of the 25S and 5.8S ribosomal RNAs and formation of the 60S ribosome. The protein is Ribosome biogenesis protein ERB1 of Candida glabrata (strain ATCC 2001 / BCRC 20586 / JCM 3761 / NBRC 0622 / NRRL Y-65 / CBS 138) (Yeast).